The following is a 536-amino-acid chain: Prolyl 3-hydroxylase sudestada1 (536 aa).

Residues 1-35 (METSSSSPVKPRRKDKDEDGRAEQEDSADQVGEPH) form a disordered region. The segment covering 14–24 (KDKDEDGRAEQ) has biased composition (basic and acidic residues). The Fe2OG dioxygenase domain occupies 165–275 (KLDYVSASCS…RLTINGWFHG (111 aa)). The Fe cation site is built by His185 and Asp187. Tyr199 lines the 2-oxoglutarate pocket. His254 contacts Fe cation. Arg266 is a 2-oxoglutarate binding site. A disordered region spans residues 467-486 (PTAKAPTDGRRSDYDDEEED).

Belongs to the TPA1 family. Monomer. Fe(2+) serves as cofactor. It depends on L-ascorbate as a cofactor. In third-instar larval tissues,highly expressed in the fat body, with significant expression in other organs including the brain, salivary glands, imaginal disks and gut.

It is found in the nucleus. The protein resides in the cytoplasm. It catalyses the reaction [ribosomal protein uS12]-L-proline + 2-oxoglutarate + O2 = [ribosomal protein uS12]-(3S)-3-hydroxy-L-proline + succinate + CO2. In terms of biological role, prolyl 3-hydroxylase that catalyzes 3-hydroxylation of 'Pro-62' of small ribosomal subunit uS12 (RpS23), thereby regulating protein translation termination efficiency. In Drosophila melanogaster (Fruit fly), this protein is Prolyl 3-hydroxylase sudestada1 (sud1).